The sequence spans 234 residues: Triosephosphate isomerase (234 aa).

Asparagine 8–lysine 10 contributes to the substrate binding site. Histidine 90 functions as the Electrophile in the catalytic mechanism. Catalysis depends on glutamate 159, which acts as the Proton acceptor. Substrate contacts are provided by glycine 165 and serine 197.

It belongs to the triosephosphate isomerase family. In terms of assembly, homodimer.

It localises to the cytoplasm. It carries out the reaction D-glyceraldehyde 3-phosphate = dihydroxyacetone phosphate. It participates in carbohydrate biosynthesis; gluconeogenesis. Its pathway is carbohydrate degradation; glycolysis; D-glyceraldehyde 3-phosphate from glycerone phosphate: step 1/1. Functionally, involved in the gluconeogenesis. Catalyzes stereospecifically the conversion of dihydroxyacetone phosphate (DHAP) to D-glyceraldehyde-3-phosphate (G3P). The sequence is that of Triosephosphate isomerase from Helicobacter pylori (strain Shi470).